The sequence spans 667 residues: Single-minded homolog 2 (667 aa).

One can recognise a bHLH domain in the interval Met-1–Arg-53. PAS domains follow at residues Ala-77–His-149 and Pro-218–Gly-288. One can recognise a PAC domain in the interval Thr-292–Ile-335. The Single-minded C-terminal domain occupies Glu-336–Arg-667. Disordered stretches follow at residues Trp-356–Gln-389, Ala-409–Ser-428, and Ser-500–Leu-520. A Nuclear localization signal motif is present at residues Arg-367 to Tyr-386. The segment covering Leu-369–Leu-381 has biased composition (basic residues). Residues Ala-409–Pro-419 show a composition bias toward low complexity.

As to quaternary structure, efficient DNA binding requires dimerization with another bHLH protein. Heterodimer of SIM2 and ARNT.

The protein localises to the nucleus. In terms of biological role, transcription factor that may be a master gene of CNS development in cooperation with Arnt. It may have pleiotropic effects in the tissues expressed during development. This Homo sapiens (Human) protein is Single-minded homolog 2 (SIM2).